A 156-amino-acid chain; its full sequence is Arginine repressor (156 aa).

It belongs to the ArgR family.

It is found in the cytoplasm. The protein operates within amino-acid biosynthesis; L-arginine biosynthesis [regulation]. Regulates arginine biosynthesis genes. The chain is Arginine repressor from Edwardsiella ictaluri (strain 93-146).